We begin with the raw amino-acid sequence, 139 residues long: Arsenate reductase (139 aa).

Residues Cys10, Cys82, and Cys89 each act as nucleophile in the active site. Cystine bridges form between Cys10-Cys82 and Cys82-Cys89.

The protein belongs to the low molecular weight phosphotyrosine protein phosphatase family. Thioredoxin-coupled ArsC subfamily.

It localises to the cytoplasm. It catalyses the reaction arsenate + [thioredoxin]-dithiol + H(+) = arsenite + [thioredoxin]-disulfide + H2O. Its function is as follows. Catalyzes the reduction of arsenate [As(V)] to arsenite [As(III)]. This Oceanobacillus iheyensis (strain DSM 14371 / CIP 107618 / JCM 11309 / KCTC 3954 / HTE831) protein is Arsenate reductase.